The chain runs to 941 residues: ATP-dependent 6-phosphofructokinase subunit beta (941 aa).

The N-terminal catalytic PFK domain 1 stretch occupies residues 2 to 558; that stretch reads PDASLFNGTS…HMKNFISTNS (557 aa). Residues glycine 191, 255 to 256, and 285 to 288 each bind ATP; these read RC and GDGS. Position 286 (aspartate 286) interacts with Mg(2+). Beta-D-fructose 6-phosphate is bound by residues 331-333, arginine 368, and 375-377; these read SID and MGR. The active-site Proton acceptor is the aspartate 333. ATP-binding positions include isoleucine 395, 400 to 405, and glutamine 410; that span reads KPASSR. Beta-D-fructose 6-phosphate is bound by residues glutamate 432, arginine 460, and 466-469; that span reads HVQR. 557–558 provides a ligand contact to ATP; that stretch reads NS. Residues 559–572 form an interdomain linker region; it reads ADHVPPSLPLEKRK. Residues 573-941 are C-terminal regulatory PFK domain 2; the sequence is KIAIINVGAP…SDMLSGRTSL (369 aa). Beta-D-fructose 2,6-bisphosphate-binding positions include arginine 643, 701–705, arginine 739, 746–748, glutamate 806, lysine 832, 838–841, and arginine 918; these read TISNN, QGG, and HVQQ.

It belongs to the phosphofructokinase type A (PFKA) family. ATP-dependent PFK group I subfamily. Eukaryotic two domain clade 'E' sub-subfamily. In terms of assembly, heterododecamer of 4 alpha, 4 beta and 4 gamma chains. It depends on Mg(2+) as a cofactor.

It is found in the cytoplasm. The catalysed reaction is beta-D-fructose 6-phosphate + ATP = beta-D-fructose 1,6-bisphosphate + ADP + H(+). It participates in carbohydrate degradation; glycolysis; D-glyceraldehyde 3-phosphate and glycerone phosphate from D-glucose: step 3/4. Allosterically activated by ADP, AMP, or fructose 2,6-bisphosphate, and allosterically inhibited by ATP or citrate. Functionally, catalyzes the phosphorylation of D-fructose 6-phosphate to fructose 1,6-bisphosphate by ATP, the first committing step of glycolysis. The protein is ATP-dependent 6-phosphofructokinase subunit beta (PFK2) of Komagataella pastoris (Yeast).